We begin with the raw amino-acid sequence, 833 residues long: MMPPTRLAGTLIPAMAFLSCLRPESWDPCVEVVPNITYQCMDLNLHKIPDNIPSSTKDLDMSFNPLRNLGSHSFSNFPELQVLDLSRCEIQIIEDDAYQGLNHLSILILTGNPIQRLFPGAFSGLSSLQTLVAVETNIASLEDFPIGHLKTLKELNVAHNLIHSFKLPEYFSNMSNLEYLDLSNNKIQNIYHKDLQVLHQKPLLNLSLDLSLNPLDFIQPGAFKEVKLRELTLRSNFNSTDVMKASIQGLAGLQIHQLVLGEFKNERNLGRFDKSILEGLCNLIIEKFRIAYFDKFSEDAIDSFNCLANVSTISLVHLYFKGLKQLPKNLGWQRLELVNCEFEQFPTWKLDPLKELVFSANEVRNAFTQVKLESLEFLDLSRNDFSLKSCCSERDLGTTRLKHLDLSFNNIITISSNFLGLEQLEYLDFQHSSLKQVSDFSVFLPLKNLRYLDISYTHTQVAFHGIFNGLISLQILKMAGNSFQDNFLPNIFMELTNLTILDLSDCQLEQVSQVAFNSLPKLQLLNMSHNHLLSLDTLPYEPLHSLQTLDCSFNRIVASKEQELRHFPSNLSSLNLTRNDFACVCEHQSFLQWVKDQRQLLVEVEQMVCAKPLDMQGMPMLNFRNATCQVRKTIITGSVFTVLLVFLVVVLVYKFYFHLMLLAGCKKYSRGESTYDAFVIYSSQDEDWVRNELVKNLEEGVPPFQLCLHYRDFIPGVAIAANIIQEGFHKSRKVIVVVSQHFIQSRWCIFEYGIAQTWQFLSSRAGIIFIVLQKLEKSLLRQQVELYRLLNRNTYLEWEDSVLGRHIFWRRLRKALLDGKPRCPEGMADAEGS.

The N-terminal stretch at 1–23 (MMPPTRLAGTLIPAMAFLSCLRP) is a signal peptide. In terms of domain architecture, LRRNT spans 24–54 (ESWDPCVEVVPNITYQCMDLNLHKIPDNIPS). Over 24–632 (ESWDPCVEVV…FRNATCQVRK (609 aa)) the chain is Extracellular. The cysteines at positions 29 and 40 are disulfide-linked. Asn-35 carries N-linked (GlcNAc...) asparagine glycosylation. LRR repeat units follow at residues 55–76 (STKD…SFSN), 79–100 (ELQV…AYQG), 103–124 (HLSI…AFSG), 127–148 (SLQT…PIGH), and 151–172 (TLKE…EYFS). N-linked (GlcNAc...) asparagine glycosylation is present at Asn-173. LRR repeat units follow at residues 176–197 (NLEY…DLQV), 205–225 (NLSL…AFKE), and 227–236 (KLRELTLRSN). Asn-205 carries N-linked (GlcNAc...) asparagine glycosylation. Residue Asn-238 is glycosylated (N-linked (GlcNAc...) asparagine). Cys-281 and Cys-306 are disulfide-bonded. N-linked (GlcNAc...) asparagine glycosylation occurs at Asn-309. 9 LRR repeats span residues 352–373 (PLKE…VKLE), 374–394 (SLEF…CSER), 400–420 (RLKH…NFLG), 423–444 (QLEY…SVFL), 448–456 (NLRYLDISY), 472–495 (SLQI…FMEL), 497–518 (NLTI…AFNS), 521–542 (KLQL…PYEP), and 545–565 (SLQT…QELR). A disulfide bridge connects residues Cys-390 and Cys-391. Asn-497 and Asn-526 each carry an N-linked (GlcNAc...) asparagine glycan. Asn-570 and Asn-575 each carry an N-linked (GlcNAc...) asparagine glycan. Residues 579–630 (NDFACVCEHQSFLQWVKDQRQLLVEVEQMVCAKPLDMQGMPMLNFRNATCQV) enclose the LRRCT domain. Cystine bridges form between Cys-583-Cys-609 and Cys-585-Cys-628. An N-linked (GlcNAc...) asparagine glycan is attached at Asn-625. Residues 633–653 (TIITGSVFTVLLVFLVVVLVY) traverse the membrane as a helical segment. The Cytoplasmic portion of the chain corresponds to 654 to 833 (KFYFHLMLLA…PEGMADAEGS (180 aa)). A TIR domain is found at 673 to 816 (STYDAFVIYS…IFWRRLRKAL (144 aa)).

This sequence belongs to the Toll-like receptor family. In terms of assembly, belongs to the lipopolysaccharide (LPS) receptor, a multi-protein complex containing at least CD14, LY96 and TLR4. Binding to bacterial LPS leads to homodimerization. Interacts with LY96 via the extracellular domain. Interacts with MYD88 and TIRAP via their respective TIR domains. Interacts with TICAM2. Interacts with NOX4. Interacts with CNPY3 and HSP90B1; this interaction is required for proper folding in the endoplasmic reticulum. Interacts with MAP3K21; this interaction leads to negative regulation of TLR4 signaling. Interacts with CD36, following CD36 stimulation by oxLDL or amyloid-beta 42, and forms a heterodimer with TLR6. The trimeric complex is internalized and triggers inflammatory response. LYN kinase activity facilitates TLR4-TLR6 heterodimerization and signal initiation. Interacts with TICAM1 in response to LPS in a WDFY1-dependent manner. Interacts with WDFY1 in response to LPS. Interacts with SMPDL3B. Interacts with CEACAM1; upon lipopolysaccharide stimulation, forms a complex including TLR4 and the phosphorylated form of SYK and CEACAM1, which in turn, recruits PTPN6 that dephosphorylates SYK, reducing the production of reactive oxygen species (ROS) and lysosome disruption, which in turn, reduces the activity of the inflammasome. Interacts with RFTN1; the interaction occurs in response to lipopolysaccharide stimulation. Interacts with SCIMP; the interaction occurs in response to lipopolysaccharide stimulation and is enhanced by phosphorylation of SCIMP by LYN. This interaction facilitates the phosphorylation of TLR4 by LYN which elicits a selective cytokine response in macrophages. Interacts with TRAF3IP3. Interacts with TREM1; this interaction enhances TLR4-mediated inflammatory response. Interacts with ZG16B/PAUF. Interacts with CD82; this interaction inhibits TLR4-mediated signaling pathway. Phosphorylated on tyrosine residues by LYN after binding lipopolysaccharide. In terms of processing, ubiquitinated by RNF128 via 'Lys-28'-linked polyubiquitin chains, leading to proteasomal degradation.

It localises to the cell membrane. The protein localises to the early endosome. The protein resides in the cell projection. It is found in the ruffle. In terms of biological role, transmembrane receptor that functions as a pattern recognition receptor recognizing pathogen- and damage-associated molecular patterns (PAMPs and DAMPs) to induce innate immune responses via downstream signaling pathways. At the plasma membrane, cooperates with LY96 to mediate the innate immune response to bacterial lipopolysaccharide (LPS). Also involved in LPS-independent inflammatory responses triggered by free fatty acids, such as palmitate, and Ni(2+). Mechanistically, acts via MYD88, TIRAP and TRAF6, leading to NF-kappa-B activation, cytokine secretion and the inflammatory response. Alternatively, CD14-mediated TLR4 internalization via endocytosis is associated with the initiation of a MYD88-independent signaling via the TICAM1-TBK1-IRF3 axis leading to type I interferon production. In addition to the secretion of proinflammatory cytokines, initiates the activation of NLRP3 inflammasome and formation of a positive feedback loop between autophagy and NF-kappa-B signaling cascade. In complex with TLR6, promotes inflammation in monocytes/macrophages by associating with TLR6 and the receptor CD86. Upon ligand binding, such as oxLDL or amyloid-beta 42, the TLR4:TLR6 complex is internalized and triggers inflammatory response, leading to NF-kappa-B-dependent production of CXCL1, CXCL2 and CCL9 cytokines, via MYD88 signaling pathway, and CCL5 cytokine, via TICAM1 signaling pathway. In myeloid dendritic cells, vesicular stomatitis virus glycoprotein G but not LPS promotes the activation of IRF7, leading to type I IFN production in a CD14-dependent manner. The polypeptide is Toll-like receptor 4 (TLR4) (Felis catus (Cat)).